We begin with the raw amino-acid sequence, 469 residues long: Acetyl-CoA decarbonylase/synthase complex subunit beta 1 (469 aa).

Residues C189, C192, C278, and C280 each coordinate [Ni-Fe-S] cluster.

It belongs to the CdhC family. In terms of assembly, monomer. The ACDS complex is made up of alpha, epsilon, beta, gamma and delta chains with a probable stoichiometry of (alpha(2)epsilon(2))(4)-beta(8)-(gamma(1)delta(1))(8) (Potential). [Ni-Fe-S] cluster serves as cofactor.

It catalyses the reaction Co(I)-[corrinoid Fe-S protein] + acetyl-CoA + H(+) = methyl-Co(III)-[corrinoid Fe-S protein] + CO + CoA. It participates in one-carbon metabolism; methanogenesis from acetate. Functionally, part of a complex that catalyzes the reversible cleavage of acetyl-CoA, allowing growth on acetate as sole source of carbon and energy. The alpha-epsilon complex generates CO from CO(2), while the beta subunit (this protein) combines the CO with CoA and a methyl group to form acetyl-CoA. The methyl group, which is incorporated into acetyl-CoA, is transferred to the beta subunit by a corrinoid iron-sulfur protein (the gamma-delta complex). The polypeptide is Acetyl-CoA decarbonylase/synthase complex subunit beta 1 (cdhC1) (Methanosarcina acetivorans (strain ATCC 35395 / DSM 2834 / JCM 12185 / C2A)).